A 337-amino-acid polypeptide reads, in one-letter code: Ketol-acid reductoisomerase (NADP(+)) (337 aa).

Residues 3-183 (VEVFYDDDAD…GGTRAGVIKT (181 aa)) enclose the KARI N-terminal Rossmann domain. Residues 26-29 (YGSQ), Ser52, Ser54, and 84-87 (DTAQ) each bind NADP(+). Residue His109 is part of the active site. Residue Gly135 coordinates NADP(+). The region spanning 184–329 (TFTEETETDL…GRLRAMMSWV (146 aa)) is the KARI C-terminal knotted domain. Mg(2+) contacts are provided by Asp192, Glu196, Glu228, and Glu232. Substrate is bound at residue Ser253.

The protein belongs to the ketol-acid reductoisomerase family. Mg(2+) is required as a cofactor.

The enzyme catalyses (2R)-2,3-dihydroxy-3-methylbutanoate + NADP(+) = (2S)-2-acetolactate + NADPH + H(+). It catalyses the reaction (2R,3R)-2,3-dihydroxy-3-methylpentanoate + NADP(+) = (S)-2-ethyl-2-hydroxy-3-oxobutanoate + NADPH + H(+). Its pathway is amino-acid biosynthesis; L-isoleucine biosynthesis; L-isoleucine from 2-oxobutanoate: step 2/4. The protein operates within amino-acid biosynthesis; L-valine biosynthesis; L-valine from pyruvate: step 2/4. Involved in the biosynthesis of branched-chain amino acids (BCAA). Catalyzes an alkyl-migration followed by a ketol-acid reduction of (S)-2-acetolactate (S2AL) to yield (R)-2,3-dihydroxy-isovalerate. In the isomerase reaction, S2AL is rearranged via a Mg-dependent methyl migration to produce 3-hydroxy-3-methyl-2-ketobutyrate (HMKB). In the reductase reaction, this 2-ketoacid undergoes a metal-dependent reduction by NADPH to yield (R)-2,3-dihydroxy-isovalerate. This Salinispora tropica (strain ATCC BAA-916 / DSM 44818 / JCM 13857 / NBRC 105044 / CNB-440) protein is Ketol-acid reductoisomerase (NADP(+)).